An 884-amino-acid polypeptide reads, in one-letter code: MFNLLFSSSNQRRINSYAATVKKINSLEQKIGNLSDEELFTKTSYFKDELKKGVTLDYILPEAFSVVREAGCRVLGLRVFDVQIIGAIILHQGKIAEMKTGEGKTLVATLAGYLNALSGKGVHIVTVNDYLARRDSEWVGQIHKFLGLSVGLIQQDLSKAERKLAYQCDVTYVTNSELGFDYLKDNMVLSMSEIVQNKFAFCIIDEVDSILIDEARTPLIISGPSEAPVEKYTQTNLLSNILFKDVHYEVDEKARNIILTDKGTLFCEDHLSIDNLYDLENPWVHYILNAIKAKELFIKDVHYIIRDNQVVIVDEFTGRIMSGRRWSDGLHQAIEAKEQVPIQQENQTYASITYQNFFLLYPKLSGMTGTAKTEESELDKIYNLEVICVPTHRPLRRKEFSDLVYSNEYRKWEAIADECYDMYRAGRPTLVGTTSVEKSELLSKLLTEYKIPHSLLNAKPENVEKESDIIAQAGRQSSVTIATNMAGRGTDIILGGNPSYIAKSILIDLLIKKISVQNNLKLQQLSLKTQYCINQILKSLEDDLIYANLSVLELEKKISIACEQVAISRNLEIQLRKAYQLIFQEYENIFSQEKKYVAQAGGLHVIGTERHESRRIDNQLRGRAGRQGDPGSSRFFLSIEDNLLRIFGGNKIADLMQALNVDDDTPMESTLLSKSLEAAQKKVEAYFYDTRKQVFEYDQVLNSQRQAIYAERRRILESGYPRDCILQYAESTIDDIVNFCLTSKENNEKFVNLNTKIKYLLNATDTFFISKDLYSDSSELKKWITEQVRINYDLREAYLEQIKPGLIRQLEKYYLLQQIDNAWKDHLQKMGALRDAIGWRSYGQQDPLVEYKNEAFNLFIEMITHVKHTVVYAILRSRLMVKND.

ATP contacts are provided by residues glutamine 83, 101–105 (GEGKT), and aspartate 491.

Belongs to the SecA family.

The protein resides in the plastid. It localises to the chloroplast stroma. Its subcellular location is the chloroplast thylakoid membrane. It carries out the reaction ATP + H2O + cellular proteinSide 1 = ADP + phosphate + cellular proteinSide 2.. In terms of biological role, has a central role in coupling the hydrolysis of ATP to the transfer of proteins across the thylakoid membrane. This Porphyra purpurea (Red seaweed) protein is Protein translocase subunit SecA.